A 246-amino-acid chain; its full sequence is Indole-3-glycerol phosphate synthase (246 aa).

The protein belongs to the TrpC family.

It catalyses the reaction 1-(2-carboxyphenylamino)-1-deoxy-D-ribulose 5-phosphate + H(+) = (1S,2R)-1-C-(indol-3-yl)glycerol 3-phosphate + CO2 + H2O. Its pathway is amino-acid biosynthesis; L-tryptophan biosynthesis; L-tryptophan from chorismate: step 4/5. This is Indole-3-glycerol phosphate synthase from Sulfurisphaera tokodaii (strain DSM 16993 / JCM 10545 / NBRC 100140 / 7) (Sulfolobus tokodaii).